The chain runs to 337 residues: Phosphatidylglycerophosphate phosphatase PTPMT1 (337 aa).

The segment at 1–20 is disordered; the sequence is MYIKELTETDEEKRERSVED. Tyrosine 55 and aspartate 133 together coordinate substrate. Positions 73–220 constitute a Tyrosine-protein phosphatase domain; sequence WWDRVAEFIL…VVEYYHVKVL (148 aa). Cysteine 164 functions as the Phosphocysteine intermediate in the catalytic mechanism. Positions 164 to 170 match the Glucan phosphatase signature motif CXAGXGR motif; it reads CKAGRGR. 165 to 170 contributes to the substrate binding site; the sequence is KAGRGR.

The protein belongs to the protein-tyrosine phosphatase family. Non-receptor class dual specificity subfamily. As to expression, expressed in stems, roots, flowers, mature seeds and leaves.

It carries out the reaction O-phospho-L-seryl-[protein] + H2O = L-seryl-[protein] + phosphate. The catalysed reaction is O-phospho-L-threonyl-[protein] + H2O = L-threonyl-[protein] + phosphate. It catalyses the reaction O-phospho-L-tyrosyl-[protein] + H2O = L-tyrosyl-[protein] + phosphate. The enzyme catalyses a 1,2-diacyl-sn-glycero-3-phospho-(1'-sn-glycero-3'-phosphate) + H2O = a 1,2-diacyl-sn-glycero-3-phospho-(1'-sn-glycerol) + phosphate. It functions in the pathway phospholipid metabolism; phosphatidylglycerol biosynthesis; phosphatidylglycerol from CDP-diacylglycerol: step 2/2. Exhibits phosphatidylglycerophosphate phosphatase activity. Involved in root growth and columella cells organization. May possess protein phosphatase activity. This Arabidopsis thaliana (Mouse-ear cress) protein is Phosphatidylglycerophosphate phosphatase PTPMT1.